The following is a 117-amino-acid chain: Replication initiation control protein YabA (117 aa).

Positions 87, 89, 103, and 106 each coordinate Zn(2+).

This sequence belongs to the YabA family. Homotetramer. Interacts with both DnaA and DnaN, acting as a bridge between these two proteins. Zn(2+) serves as cofactor.

It localises to the cytoplasm. The protein resides in the nucleoid. Functionally, involved in control of chromosome replication initiation. Inhibits the cooperative binding of DnaA to the oriC region, thus negatively regulating initiation of chromosome replication. Inhibits the ability of DnaA-ATP to form a helix on DNA; does not disassemble preformed DnaA-DNA helices. Decreases the residence time of DnaA on the chromosome at its binding sites (oriC, replication forks and promoter-binding sites). Tethers DnaA to the replication machinery via the DNA polymerase beta sliding clamp subunit (dnaN). Associates with oriC and other DnaA targets on the chromosome in a DnaA-dependent manner. The polypeptide is Replication initiation control protein YabA (Latilactobacillus sakei subsp. sakei (strain 23K) (Lactobacillus sakei subsp. sakei)).